Consider the following 27-residue polypeptide: XFEGRGGFGGRGGGDRGGRGXGGFGGG.

Residues 1–12 (XFEGRGGFGGRG) show a composition bias toward gly residues. A disordered region spans residues 1-27 (XFEGRGGFGGRGGGDRGGRGXGGFGGG). 4 positions are modified to asymmetric dimethylarginine: arginine 5, arginine 11, arginine 16, and arginine 19.

The protein belongs to the methyltransferase superfamily. Fibrillarin family. As to quaternary structure, component of box C/D small nucleolar ribonucleoprotein (snoRNP) particles. It is associated with the U3, U8 and U13 small nuclear RNAs.

The protein resides in the nucleus. It localises to the nucleolus. The enzyme catalyses L-glutaminyl-[histone H2A] + S-adenosyl-L-methionine = N(5)-methyl-L-glutaminyl-[histone H2A] + S-adenosyl-L-homocysteine + H(+). Functionally, S-adenosyl-L-methionine-dependent methyltransferase that has the ability to methylate both RNAs and proteins. Involved in pre-rRNA processing. Utilizes the methyl donor S-adenosyl-L-methionine to catalyze the site-specific 2'-hydroxyl methylation of ribose moieties in pre-ribosomal RNA. Site specificity is provided by a guide RNA that base pairs with the substrate. Methylation occurs at a characteristic distance from the sequence involved in base pairing with the guide RNA. Also acts as a protein methyltransferase by mediating methylation of 'Gln-105' of histone H2A (H2AQ105me), a modification that impairs binding of the FACT complex and is specifically present at 35S ribosomal DNA locus. The chain is rRNA/tRNA 2'-O-methyltransferase fibrillarin from Physarum polycephalum (Slime mold).